Here is a 179-residue protein sequence, read N- to C-terminus: MLRFKELYQQKIIENLQKKFSYKNKHEIPQIKKIVINMGVGEATADSKVINNAVNDLTLISGQKPVVTLARKSIATFKLRENMKIGCKVTLRKDRMYDFLERLVIVALPRVKEFRGFSYKSFDGKGNFTFGLKEQIVFPEINYDKIDTIRGMDITIVTSAKTDQESKFLLSGFNLPFYN.

It belongs to the universal ribosomal protein uL5 family. In terms of assembly, part of the 50S ribosomal subunit; part of the 5S rRNA/L5/L18/L25 subcomplex. Contacts the 5S rRNA and the P site tRNA. Forms a bridge to the 30S subunit in the 70S ribosome.

In terms of biological role, this is one of the proteins that bind and probably mediate the attachment of the 5S RNA into the large ribosomal subunit, where it forms part of the central protuberance. In the 70S ribosome it contacts protein S13 of the 30S subunit (bridge B1b), connecting the 2 subunits; this bridge is implicated in subunit movement. Contacts the P site tRNA; the 5S rRNA and some of its associated proteins might help stabilize positioning of ribosome-bound tRNAs. This chain is Large ribosomal subunit protein uL5, found in Rickettsia africae (strain ESF-5).